The chain runs to 264 residues: Hemin import ATP-binding protein HmuV (264 aa).

The ABC transporter domain occupies 10-246 (LQAQNLSYSI…HTLRKWYQAD (237 aa)). ATP is bound at residue 42–49 (GPNGAGKS).

Belongs to the ABC transporter superfamily. Heme (hemin) importer (TC 3.A.1.14.5) family. In terms of assembly, the complex is composed of two ATP-binding proteins (HmuV), two transmembrane proteins (HmuU) and a solute-binding protein (HmuT).

Its subcellular location is the cell inner membrane. In terms of biological role, part of the ABC transporter complex HmuTUV involved in hemin import. Responsible for energy coupling to the transport system. The protein is Hemin import ATP-binding protein HmuV of Photorhabdus laumondii subsp. laumondii (strain DSM 15139 / CIP 105565 / TT01) (Photorhabdus luminescens subsp. laumondii).